The chain runs to 97 residues: MEVTDVRLRRVNTEGRMRAIASITLDHEFVVHDIRVIDGNNGLFVAMPSKRTPDGEFRDIAHPINSNTRSKIQDAVLTEYHRLGELEEVEFEEAGAS.

The protein belongs to the SpoVG family.

Functionally, essential for sporulation. Interferes with or is a negative regulator of the pathway leading to asymmetric septation. The chain is Putative septation protein SpoVG from Bacillus cytotoxicus (strain DSM 22905 / CIP 110041 / 391-98 / NVH 391-98).